Reading from the N-terminus, the 138-residue chain is Basic phospholipase A2 homolog acutohaemolysin (138 aa).

The signal sequence occupies residues 1–16 (MRALWIVAVLLVGVEG). 7 disulfides stabilise this stretch: Cys-42-Cys-131, Cys-44-Cys-60, Cys-59-Cys-111, Cys-65-Cys-138, Cys-66-Cys-104, Cys-73-Cys-97, and Cys-91-Cys-102. The segment at 121 to 133 (KSFRYHLKPSCKK) is important for membrane-damaging activities in eukaryotes and bacteria; heparin-binding.

In terms of assembly, monomer. As to expression, expressed by the venom gland.

It localises to the secreted. Functionally, snake venom phospholipase A2 homolog that lacks enzymatic activity. Is myotoxic. Has a strong indirect hemolytic activity and anticoagulant activity. A model of myotoxic mechanism has been proposed: an apo Lys49-PLA2 is activated by the entrance of a hydrophobic molecule (e.g. fatty acid) at the hydrophobic channel of the protein leading to a reorientation of a monomer. This reorientation causes a transition between 'inactive' to 'active' states, causing alignment of C-terminal and membrane-docking sites (MDoS) side-by-side and putting the membrane-disruption sites (MDiS) in the same plane, exposed to solvent and in a symmetric position for both monomers. The MDoS region stabilizes the toxin on membrane by the interaction of charged residues with phospholipid head groups. Subsequently, the MDiS region destabilizes the membrane with penetration of hydrophobic residues. This insertion causes a disorganization of the membrane, allowing an uncontrolled influx of ions (i.e. calcium and sodium), and eventually triggering irreversible intracellular alterations and cell death. The sequence is that of Basic phospholipase A2 homolog acutohaemolysin from Deinagkistrodon acutus (Hundred-pace snake).